Consider the following 103-residue polypeptide: Cell division protein FtsB (103 aa).

At 1-3 (MGK) the chain is on the cytoplasmic side. Residues 4-21 (LTLLLLAILVWLQYSLWF) form a helical membrane-spanning segment. Residues 22–103 (GKNGIHDYTR…RAQSAGQNNR (82 aa)) lie on the Periplasmic side of the membrane. The stretch at 31–71 (RVNNDVAAQQATNAKLKARNDQLFAEIDDLNGGQEALEERA) forms a coiled coil.

This sequence belongs to the FtsB family. In terms of assembly, part of a complex composed of FtsB, FtsL and FtsQ.

Its subcellular location is the cell inner membrane. In terms of biological role, essential cell division protein. May link together the upstream cell division proteins, which are predominantly cytoplasmic, with the downstream cell division proteins, which are predominantly periplasmic. The protein is Cell division protein FtsB of Escherichia coli O81 (strain ED1a).